A 365-amino-acid polypeptide reads, in one-letter code: Galactoside alpha-(1,2)-fucosyltransferase 1 (365 aa).

The Cytoplasmic segment spans residues 1-8 (MWPLSHRH). Residues 9–25 (LCLAFLLVCVLSAISFF) traverse the membrane as a helical; Signal-anchor for type II membrane protein segment. The Lumenal portion of the chain corresponds to 26–365 (LHIYQDSIRH…LSSLWTLAEP (340 aa)). N-linked (GlcNAc...) asparagine glycosylation is found at Asn-65, Asn-301, and Asn-327.

The protein belongs to the glycosyltransferase 11 family.

The protein localises to the golgi apparatus. It localises to the golgi stack membrane. It carries out the reaction a beta-D-galactosyl-(1-&gt;4)-N-acetyl-beta-D-glucosaminyl derivative + GDP-beta-L-fucose = an alpha-L-Fuc-(1-&gt;2)-beta-D-Gal-(1-&gt;4)-beta-D-GlcNAc derivative + GDP + H(+). It catalyses the reaction a ganglioside GA1 + GDP-beta-L-fucose = a ganglioside Fuc-GA1 + GDP + H(+). The enzyme catalyses a beta-D-Gal-(1-&gt;3)-beta-D-GlcNAc-(1-&gt;3)-beta-D-Gal-(1-&gt;4)-beta-D-Glc-(1&lt;-&gt;1')-Cer(d18:1(4E)) + GDP-beta-L-fucose = alpha-L-fucosyl-(1-&gt;2)- beta-D-galactosyl-(1-&gt;3)-N-acetyl-beta-D-glucosaminyl-(1-&gt;3)-beta-D-galactosyl-(1-&gt;4)-beta-D-glucosyl-(1&lt;-&gt;1')-N-acylsphing-4-enine + GDP + H(+). The catalysed reaction is a neolactoside nLc4Cer(d18:1(4E)) + GDP-beta-L-fucose = a neolactoside IV(2)-alpha-Fuc-nLc4Cer(d18:1(4E)) + GDP + H(+). It carries out the reaction a ganglioside GM1 + GDP-beta-L-fucose = a ganglioside Fuc-GM1 + GDP + H(+). It catalyses the reaction beta-D-galactosyl-(1-&gt;3)-N-acetyl-D-galactosamine + GDP-beta-L-fucose = alpha-L-fucosyl-(1-&gt;2)-beta-D-galactosyl-(1-&gt;3)-N-acetyl-D-galactosamine + GDP + H(+). It participates in protein modification; protein glycosylation. Functionally, catalyzes the transfer of L-fucose, from a guanosine diphosphate-beta-L-fucose, to the terminal galactose residue of glycoconjugates through an alpha(1,2) linkage leading to H antigen synthesis that is an intermediate substrate in the synthesis of ABO blood group antigens. H antigen is essential for maturation of the glomerular layer of the main olfactory bulb, in cell migration and early cell-cell contacts during tumor associated angiogenesis. Preferentially fucosylates soluble lactose and to a lesser extent fucosylates glycolipids gangliosides GA1 and GM1a. The chain is Galactoside alpha-(1,2)-fucosyltransferase 1 from Leontocebus fuscicollis (Brown-mantled tamarin).